Reading from the N-terminus, the 557-residue chain is Dihydroxy-acid dehydratase (557 aa).

C50 contacts [2Fe-2S] cluster. A Mg(2+)-binding site is contributed by D82. Residue C123 coordinates [2Fe-2S] cluster. Mg(2+) contacts are provided by D124 and K125. At K125 the chain carries N6-carboxylysine. A [2Fe-2S] cluster-binding site is contributed by C195. A Mg(2+)-binding site is contributed by E447. Catalysis depends on S473, which acts as the Proton acceptor.

Belongs to the IlvD/Edd family. Homodimer. It depends on [2Fe-2S] cluster as a cofactor. Mg(2+) serves as cofactor.

The catalysed reaction is (2R)-2,3-dihydroxy-3-methylbutanoate = 3-methyl-2-oxobutanoate + H2O. It carries out the reaction (2R,3R)-2,3-dihydroxy-3-methylpentanoate = (S)-3-methyl-2-oxopentanoate + H2O. It participates in amino-acid biosynthesis; L-isoleucine biosynthesis; L-isoleucine from 2-oxobutanoate: step 3/4. The protein operates within amino-acid biosynthesis; L-valine biosynthesis; L-valine from pyruvate: step 3/4. Functions in the biosynthesis of branched-chain amino acids. Catalyzes the dehydration of (2R,3R)-2,3-dihydroxy-3-methylpentanoate (2,3-dihydroxy-3-methylvalerate) into 2-oxo-3-methylpentanoate (2-oxo-3-methylvalerate) and of (2R)-2,3-dihydroxy-3-methylbutanoate (2,3-dihydroxyisovalerate) into 2-oxo-3-methylbutanoate (2-oxoisovalerate), the penultimate precursor to L-isoleucine and L-valine, respectively. The chain is Dihydroxy-acid dehydratase from Janthinobacterium sp. (strain Marseille) (Minibacterium massiliensis).